Here is a 187-residue protein sequence, read N- to C-terminus: Oligoribonuclease (187 aa).

Positions 7-170 (LCWLDMEMTG…DDILESIEEM (164 aa)) constitute an Exonuclease domain. The active site involves Tyr-128.

The protein belongs to the oligoribonuclease family.

The protein localises to the cytoplasm. 3'-to-5' exoribonuclease specific for small oligoribonucleotides. The protein is Oligoribonuclease of Neisseria meningitidis serogroup C / serotype 2a (strain ATCC 700532 / DSM 15464 / FAM18).